The primary structure comprises 646 residues: UvrABC system protein B (646 aa).

The region spanning 29–411 is the Helicase ATP-binding domain; the sequence is LEKNPEKSKQ…SNQVVEQIIR (383 aa). 42–49 contacts ATP; it reads GVTGSGKT. A Beta-hairpin motif is present at residues 95–118; the sequence is YYDYYQPESYIPQKDQYIEKDAQI. The Helicase C-terminal domain occupies 428–590; the sequence is QVEDIIKETE…ITPQTIVKPI (163 aa). A UVR domain is found at 609-644; sequence PNVIVELEAEMYEAAEALEFEKAIKIRDTIAKLKKK.

The protein belongs to the UvrB family. In terms of assembly, forms a heterotetramer with UvrA during the search for lesions. Interacts with UvrC in an incision complex.

The protein localises to the cytoplasm. Its function is as follows. The UvrABC repair system catalyzes the recognition and processing of DNA lesions. A damage recognition complex composed of 2 UvrA and 2 UvrB subunits scans DNA for abnormalities. Upon binding of the UvrA(2)B(2) complex to a putative damaged site, the DNA wraps around one UvrB monomer. DNA wrap is dependent on ATP binding by UvrB and probably causes local melting of the DNA helix, facilitating insertion of UvrB beta-hairpin between the DNA strands. Then UvrB probes one DNA strand for the presence of a lesion. If a lesion is found the UvrA subunits dissociate and the UvrB-DNA preincision complex is formed. This complex is subsequently bound by UvrC and the second UvrB is released. If no lesion is found, the DNA wraps around the other UvrB subunit that will check the other stand for damage. The protein is UvrABC system protein B of Methanococcus maripaludis (strain DSM 14266 / JCM 13030 / NBRC 101832 / S2 / LL).